Consider the following 522-residue polypeptide: Gypsy retrotransposon integrase-like protein 1 (522 aa).

An Integrase catalytic domain is found at 135-292; the sequence is KVENPWSLVT…TPYFQMFSRN (158 aa).

In Macaca fascicularis (Crab-eating macaque), this protein is Gypsy retrotransposon integrase-like protein 1 (GIN1).